Reading from the N-terminus, the 389-residue chain is WAT1-related protein At1g21890 (389 aa).

10 helical membrane-spanning segments follow: residues 13 to 33 (LAMI…MVSL), 40 to 60 (YVLA…FALF), 73 to 93 (IFLQ…NLYY), 102 to 122 (TFAS…AIIF), 142 to 162 (VITV…VDFI), 191 to 211 (WIPG…FFIL), 225 to 245 (LTTL…LVTV), 260 to 280 (FAAA…QGVV), 287 to 307 (VFVA…GVVV), and 312 to 332 (IHLG…TVVW). 2 EamA domains span residues 23–150 (AGMY…GALL) and 205–331 (WAGF…YTVV). Residues 339 to 361 (RMTDDDEDCKGLPIKSPVKPVDT) are disordered.

It belongs to the drug/metabolite transporter (DMT) superfamily. Plant drug/metabolite exporter (P-DME) (TC 2.A.7.4) family.

Its subcellular location is the membrane. This Arabidopsis thaliana (Mouse-ear cress) protein is WAT1-related protein At1g21890.